A 187-amino-acid polypeptide reads, in one-letter code: MNLQHHFLIAMPSLQDPRFKRSVIYVCEHNEDGAMGLVINKPVEQFTVETVLSKLKIMPQARDPAISLDKPVFAGGPLADDRGFILHTPRKGFGSSIQISPDTMITTSKDVLETLGTPEQPDDVLVALGYAGWEKGQLEQEVLENAWLTIEADTDILFHTPIASRWREAANRLGIDICSIANHAGHA.

The protein belongs to the UPF0301 (AlgH) family.

The chain is UPF0301 protein Spro_4027 from Serratia proteamaculans (strain 568).